A 260-amino-acid chain; its full sequence is Proteasome subunit alpha (260 aa).

Residues 231-260 form a disordered region; it reads LLPEDFSPGQTEGGGDPAPESGDSKDAKDN.

This sequence belongs to the peptidase T1A family. The 20S proteasome core is composed of 14 alpha and 14 beta subunits that assemble into four stacked heptameric rings, resulting in a barrel-shaped structure. The two inner rings, each composed of seven catalytic beta subunits, are sandwiched by two outer rings, each composed of seven alpha subunits. The catalytic chamber with the active sites is on the inside of the barrel. Has a gated structure, the ends of the cylinder being occluded by the N-termini of the alpha-subunits. Is capped by the proteasome-associated ATPase, ARC.

It is found in the cytoplasm. Its pathway is protein degradation; proteasomal Pup-dependent pathway. Its activity is regulated as follows. The formation of the proteasomal ATPase ARC-20S proteasome complex, likely via the docking of the C-termini of ARC into the intersubunit pockets in the alpha-rings, may trigger opening of the gate for substrate entry. Interconversion between the open-gate and close-gate conformations leads to a dynamic regulation of the 20S proteasome proteolysis activity. In terms of biological role, component of the proteasome core, a large protease complex with broad specificity involved in protein degradation. This is Proteasome subunit alpha from Mycobacteroides abscessus (strain ATCC 19977 / DSM 44196 / CCUG 20993 / CIP 104536 / JCM 13569 / NCTC 13031 / TMC 1543 / L948) (Mycobacterium abscessus).